Here is an 88-residue protein sequence, read N- to C-terminus: Small ribosomal subunit protein uS15 (88 aa).

Belongs to the universal ribosomal protein uS15 family. In terms of assembly, part of the 30S ribosomal subunit. Forms a bridge to the 50S subunit in the 70S ribosome, contacting the 23S rRNA.

Functionally, one of the primary rRNA binding proteins, it binds directly to 16S rRNA where it helps nucleate assembly of the platform of the 30S subunit by binding and bridging several RNA helices of the 16S rRNA. In terms of biological role, forms an intersubunit bridge (bridge B4) with the 23S rRNA of the 50S subunit in the ribosome. This chain is Small ribosomal subunit protein uS15, found in Acidovorax sp. (strain JS42).